Here is an 826-residue protein sequence, read N- to C-terminus: Copper-transporting ATPase 1 (826 aa).

2 HMA domains span residues 15-80 (APTD…YEPK) and 82-147 (IIQE…YDVR). Cu cation contacts are provided by Cys-26, Cys-29, Cys-93, and Cys-96. Helical transmembrane passes span 172–192 (LVILSAVLTLPLFLVEMGSHF), 209–229 (NLYIQFALATAVLFGPGLRFF), 246–266 (LVVLGTTAAWGYSVVATFASG), 270–290 (SGTANVYYEAAAVIVTLILLG), 429–449 (AWFVPAVILVAVLTFAAWYVF), and 457–477 (FALVNAVAVLIIACPCAMGLA). The 4-aspartylphosphate intermediate role is filled by Asp-514. 2 residues coordinate Mg(2+): Asp-713 and Asp-717. 2 helical membrane-spanning segments follow: residues 772–792 (FWAFAYNVSLVPVAAGVLYPL) and 795–815 (TLLSPILAAAAMAMSSVFVLG).

The protein belongs to the cation transport ATPase (P-type) (TC 3.A.3) family. Type IB subfamily.

It localises to the cell membrane. The catalysed reaction is Cu(2+)(in) + ATP + H2O = Cu(2+)(out) + ADP + phosphate + H(+). Functionally, involved in copper transport. The chain is Copper-transporting ATPase 1 (actP1) from Rhizobium meliloti (strain 1021) (Ensifer meliloti).